The following is a 717-amino-acid chain: Glutamine--fructose-6-phosphate aminotransferase [isomerizing] (717 aa).

Residue cysteine 2 is the For GATase activity of the active site. Positions 2–318 constitute a Glutamine amidotransferase type-2 domain; it reads CGIFGYCNYL…DDDLAHIYDG (317 aa). Serine 253 carries the post-translational modification Phosphoserine. Threonine 334 is subject to Phosphothreonine. Residue serine 336 is modified to Phosphoserine. SIS domains follow at residues 390–529 and 562–707; these read WLPV…DRVS and CATE…VDFP.

It carries out the reaction D-fructose 6-phosphate + L-glutamine = D-glucosamine 6-phosphate + L-glutamate. It participates in nucleotide-sugar biosynthesis; UDP-N-acetyl-alpha-D-glucosamine biosynthesis; alpha-D-glucosamine 6-phosphate from D-fructose 6-phosphate: step 1/1. Involved in amino sugar synthesis (formation of chitin, supplies the amino sugars of asparagine-linked oligosaccharides of glycoproteins). This Saccharomyces cerevisiae (strain ATCC 204508 / S288c) (Baker's yeast) protein is Glutamine--fructose-6-phosphate aminotransferase [isomerizing] (GFA1).